Here is a 346-residue protein sequence, read N- to C-terminus: 3-dehydroquinate synthase (346 aa).

NAD(+) contacts are provided by residues Asp62–Lys67, Gly96–Asp100, Thr120–Thr121, Lys133, and Lys142. Zn(2+) contacts are provided by Glu175, His234, and His251.

It belongs to the sugar phosphate cyclases superfamily. Dehydroquinate synthase family. Co(2+) is required as a cofactor. It depends on Zn(2+) as a cofactor. The cofactor is NAD(+).

It localises to the cytoplasm. The enzyme catalyses 7-phospho-2-dehydro-3-deoxy-D-arabino-heptonate = 3-dehydroquinate + phosphate. It functions in the pathway metabolic intermediate biosynthesis; chorismate biosynthesis; chorismate from D-erythrose 4-phosphate and phosphoenolpyruvate: step 2/7. Functionally, catalyzes the conversion of 3-deoxy-D-arabino-heptulosonate 7-phosphate (DAHP) to dehydroquinate (DHQ). In Campylobacter fetus subsp. fetus (strain 82-40), this protein is 3-dehydroquinate synthase.